The following is a 686-amino-acid chain: Myb-related protein B (686 aa).

A disordered region spans residues methionine 1–glycine 28. HTH myb-type domains are found at residues arginine 26–leucine 77, asparagine 78–valine 133, and lysine 134–valine 184. 3 DNA-binding regions (H-T-H motif) span residues tryptophan 54–leucine 77, tryptophan 106–leucine 129, and tryptophan 157–isoleucine 180. 2 disordered regions span residues cysteine 315–tyrosine 355 and tyrosine 493–tyrosine 512. Over residues proline 326–serine 343 the composition is skewed to low complexity.

In terms of assembly, component of the DREAM complex. As to expression, expressed in hematopoietic and non hematopoietic cells.

The protein localises to the nucleus. Functionally, represses v-myb- and c-myb-mediated activation of the mim-1 gene, probably by competing with other myb proteins for binding sites. It is an inhibitory member of the myb family. The protein is Myb-related protein B (MYBL2) of Gallus gallus (Chicken).